The chain runs to 215 residues: MPTVLVTGFDPFENEPVNPSWEAVRTLDGQGIAGADIVTRQLPTVFGESIRVLDRLLMSLRPDVVIAVGQAGGRAEMAIERVAINVDDARIADNAGRQPIDTAIVAGGPAAYFSTLPIKAIVHELRAAGVPASVSQTAGTFVCNHVFYGLMHAIAHHGLHARGGFIHIPYLPAQAAGHPGQPSMAHDTVVAGLRIAIETTLRRQEDIREAGGQLH.

Catalysis depends on residues Glu-80, Cys-143, and His-167.

This sequence belongs to the peptidase C15 family. As to quaternary structure, homotetramer.

The protein localises to the cytoplasm. It carries out the reaction Release of an N-terminal pyroglutamyl group from a polypeptide, the second amino acid generally not being Pro.. Its function is as follows. Removes 5-oxoproline from various penultimate amino acid residues except L-proline. In Ralstonia nicotianae (strain ATCC BAA-1114 / GMI1000) (Ralstonia solanacearum), this protein is Pyrrolidone-carboxylate peptidase 1.